The chain runs to 501 residues: Putative matrix metalloproteinase (501 aa).

The N-terminal stretch at Met1–Thr26 is a signal peptide. Asn48, Asn58, Asn61, Asn94, Asn116, and Asn163 each carry an N-linked (GlcNAc...) asparagine; by host glycan. Position 179 (His179) interacts with Zn(2+). Residue Glu180 is part of the active site. The Zn(2+) site is built by His183 and His189. N-linked (GlcNAc...) asparagine; by host glycans are attached at residues Asn192, Asn267, Asn280, and Asn291. The stretch at Thr311–Pro356 is one Hemopexin repeat. 2 N-linked (GlcNAc...) asparagine; by host glycosylation sites follow: Asn379 and Asn493.

This sequence belongs to the peptidase M10A family. The cofactor is Zn(2+).

This chain is Putative matrix metalloproteinase, found in Trichoplusia ni ascovirus 2c (TnAV-2c).